Consider the following 595-residue polypeptide: uncharacterized protein (595 aa).

The segment at 112-180 is disordered; sequence VRPPGYDPES…KDVFGRALPT (69 aa). Basic and acidic residues-rich tracts occupy residues 120-133 and 161-174; these read ESAK…EKHK and RTQE…KDVF. The CCHC-type; degenerate zinc-finger motif lies at 211 to 228; sequence VKCLRCGNFGHQSGDRDC. Disordered stretches follow at residues 254–290 and 310–595; these read HTDP…IVAE and KSMS…RRRN. Positions 256-267 are enriched in basic and acidic residues; that stretch reads DPSEPLKWELKQ. Basic residues-rich tracts occupy residues 316–331 and 351–364; these read KKRK…KHSS and RGSK…KKSK. Composition is skewed to basic and acidic residues over residues 414–428, 470–539, and 547–565; these read HYYD…EIVD, VSEK…HVYE, and FSDR…ESNR. The segment covering 584-595 has biased composition (basic residues); the sequence is RKHRYSTNRRRN.

This is an uncharacterized protein from Arabidopsis thaliana (Mouse-ear cress).